Reading from the N-terminus, the 236-residue chain is Phosphoribosylaminoimidazole-succinocarboxamide synthase (236 aa).

This sequence belongs to the SAICAR synthetase family.

The catalysed reaction is 5-amino-1-(5-phospho-D-ribosyl)imidazole-4-carboxylate + L-aspartate + ATP = (2S)-2-[5-amino-1-(5-phospho-beta-D-ribosyl)imidazole-4-carboxamido]succinate + ADP + phosphate + 2 H(+). It participates in purine metabolism; IMP biosynthesis via de novo pathway; 5-amino-1-(5-phospho-D-ribosyl)imidazole-4-carboxamide from 5-amino-1-(5-phospho-D-ribosyl)imidazole-4-carboxylate: step 1/2. The chain is Phosphoribosylaminoimidazole-succinocarboxamide synthase from Hahella chejuensis (strain KCTC 2396).